A 188-amino-acid polypeptide reads, in one-letter code: Putative manganese efflux pump MntP (188 aa).

6 helical membrane-spanning segments follow: residues 8-28, 39-59, 68-88, 106-126, 131-151, and 164-184; these read CLGL…GFVI, IALF…LTGL, IDHW…IYEA, LLAL…GLSL, ILLP…IGVF, and IEII…IEDL.

Belongs to the MntP (TC 9.B.29) family.

The protein resides in the cell inner membrane. Its function is as follows. Probably functions as a manganese efflux pump. This chain is Putative manganese efflux pump MntP, found in Crocosphaera subtropica (strain ATCC 51142 / BH68) (Cyanothece sp. (strain ATCC 51142)).